The sequence spans 256 residues: Probable hydroxyacylglutathione hydrolase glo2 (256 aa).

The Zn(2+) site is built by His63, His65, Asp67, His68, His118, and Asp139. Substrate contacts are provided by residues Arg148, 178 to 180 (HEY), and 250 to 253 (RDMK). Residue His178 participates in Zn(2+) binding.

Belongs to the metallo-beta-lactamase superfamily. Glyoxalase II family. The cofactor is Zn(2+).

The protein resides in the cytoplasm. The protein localises to the nucleus. The catalysed reaction is an S-(2-hydroxyacyl)glutathione + H2O = a 2-hydroxy carboxylate + glutathione + H(+). It carries out the reaction (R)-S-lactoylglutathione + H2O = (R)-lactate + glutathione + H(+). It participates in secondary metabolite metabolism; methylglyoxal degradation; (R)-lactate from methylglyoxal: step 2/2. Its function is as follows. Thiolesterase that catalyzes the hydrolysis of S-D-lactoylglutathione to form glutathione and D-lactic acid. Involved in the metabolism of methylglyoxal, a toxic compound for yeast proliferation, by converting methylglyoxal to lactate via S-D-lactoylglutathione by sequential enzyme reactions catalyzed by glyoxalase I and glyoxalase II. The sequence is that of Probable hydroxyacylglutathione hydrolase glo2 (glo2) from Schizosaccharomyces pombe (strain 972 / ATCC 24843) (Fission yeast).